The following is a 151-amino-acid chain: Mitochondrial intermembrane space import and assembly protein 40 homolog (151 aa).

The disordered stretch occupies residues 1 to 35 (MGQGLSQPAQAVEEPSPPAVEAAPSSSPSPAPAPS). Residues 7–26 (QPAQAVEEPSPPAVEAAPSS) show a composition bias toward low complexity. 3 cysteine pairs are disulfide-bonded: C65/C67, C76/C109, and C86/C99. A CHCH domain is found at 73-117 (NGPCGSQFVDAFSCFLKSTEEEKGSDCVKPFIALQDCIKINPEAF). Short sequence motifs (cx9C motif) lie at residues 76 to 86 (CGSQFVDAFSC) and 99 to 109 (CVKPFIALQDC). The tract at residues 123 to 151 (EEEENDEEAEKSNLKVRAPAWSRESKPKL) is disordered.

The protein resides in the mitochondrion intermembrane space. It is found in the peroxisome matrix. In terms of biological role, required for the import and folding of small cysteine-containing proteins in the mitochondrial intermembrane space. The sequence is that of Mitochondrial intermembrane space import and assembly protein 40 homolog from Oryza sativa subsp. japonica (Rice).